Consider the following 216-residue polypeptide: uncharacterized protein (216 aa).

This is an uncharacterized protein from Saccharomyces cerevisiae (strain ATCC 204508 / S288c) (Baker's yeast).